The chain runs to 489 residues: Rhamnulokinase (489 aa).

An ATP-binding site is contributed by 13–17 (ASSGR). Cysteines 68 and 222 form a disulfide. Residues glycine 83 and 236–238 (HDT) contribute to the substrate site. Aspartate 237 serves as the catalytic Proton acceptor. Position 259 (threonine 259) interacts with ATP. Residue asparagine 296 participates in substrate binding. Glutamine 304 contributes to the ATP binding site. Residues cysteine 353 and cysteine 370 are joined by a disulfide bond. Glycine 402 serves as a coordination point for ATP. Cysteine 413 and cysteine 417 are oxidised to a cystine.

Belongs to the rhamnulokinase family. Mg(2+) serves as cofactor.

It carries out the reaction L-rhamnulose + ATP = L-rhamnulose 1-phosphate + ADP + H(+). It functions in the pathway carbohydrate degradation; L-rhamnose degradation; glycerone phosphate from L-rhamnose: step 2/3. Involved in the catabolism of L-rhamnose (6-deoxy-L-mannose). Catalyzes the transfer of the gamma-phosphate group from ATP to the 1-hydroxyl group of L-rhamnulose to yield L-rhamnulose 1-phosphate. In Salmonella typhimurium (strain LT2 / SGSC1412 / ATCC 700720), this protein is Rhamnulokinase.